The following is a 330-amino-acid chain: Basic leucine zipper 2 (330 aa).

Positions 1-207 are disordered; the sequence is MAQLPPKIPT…NRQSAQRSRV (207 aa). Residues 21–34 are compositionally biased toward basic residues; sequence GHHHHAAHGHHHQR. The segment covering 45–56 has biased composition (pro residues); the sequence is PLPPFPLPPPAP. Low complexity-rich tracts occupy residues 57-72 and 139-151; these read ANGG…QHQP and QPAA…SSPS. Residues 155–166 show a composition bias toward basic and acidic residues; the sequence is SMNDEKQDKGET. The 57-residue stretch at 188–244 folds into the bZIP domain; sequence DPKRVKRILANRQSAQRSRVRKLQYISELERSVTSLQTEVSALSPRVAFLDHQRSLL. Residues 190 to 209 are basic motif; the sequence is KRVKRILANRQSAQRSRVRK. The tract at residues 216–244 is leucine-zipper; the sequence is LERSVTSLQTEVSALSPRVAFLDHQRSLL. Residues 267-330 form a disordered region; sequence GGTEEGDREA…LVIGRDPDAL (64 aa).

In terms of tissue distribution, expressed in roots, shoots and panicles.

Its subcellular location is the nucleus. In terms of biological role, transcription regulator. This Oryza sativa subsp. japonica (Rice) protein is Basic leucine zipper 2 (BZIP02).